Consider the following 482-residue polypeptide: Probable cytochrome P450 508D1 (482 aa).

Residues 1 to 21 (MVYLKNILIFLIIFLINPLVK) form a helical membrane-spanning segment. Cys428 provides a ligand contact to heme.

This sequence belongs to the cytochrome P450 family. It depends on heme as a cofactor.

It localises to the membrane. The sequence is that of Probable cytochrome P450 508D1 (cyp508D1) from Dictyostelium discoideum (Social amoeba).